The following is a 670-amino-acid chain: Solute carrier organic anion transporter family member 1A1 (670 aa).

Residues 1–20 (MEETEKKVATQEGRFFSKMK) are Cytoplasmic-facing. A helical membrane pass occupies residues 21–40 (VFLMSLTCAYLAKSLSGVYM). The Extracellular segment spans residues 41–59 (NSMLTQIERQFGIPTSVVG). The chain crosses the membrane as a helical span at residues 60–80 (FITGSFEIGNLLLIVFVSYFG). At 81-86 (RKLHRP) the chain is on the cytoplasmic side. Residues 87 to 111 (IIIGVGCVVMGLGCFLMASPHFLMG) traverse the membrane as a helical segment. At 112-155 (RYKYETTISPTSNLSSNSFLCIENRTQTLKPTQDPTECVKEIKS) the chain is on the extracellular side. N-linked (GlcNAc...) asparagine glycans are attached at residues Asn124 and Asn135. The helical transmembrane segment at 156 to 184 (LMWIYVLIGNTMRGIGETPIMPLGISYIE) threads the bilayer. The Cytoplasmic portion of the chain corresponds to 185 to 203 (DFAKSENSPLYIGILEMGK). Residues 204 to 224 (IVGPIIGLLLGSFFARVYVDI) form a helical membrane-spanning segment. Topologically, residues 225–242 (GSVNTDDLTITPTDTRWV) are extracellular. A helical transmembrane segment spans residues 243–267 (GAWWIGFLVCAGVNILTSIPFFFFP). The Cytoplasmic portion of the chain corresponds to 268 to 311 (KTLPKKELQDNVDVTKYEKVEKHRERAKKENLGITKDFLPFMKS). A helical transmembrane segment spans residues 312–333 (LCCNPIYMLFSLTSVLQINGFA). Residues 334–353 (STFTFLPKYLEQQYGKSTSE) are Extracellular-facing. The helical transmembrane segment at 354 to 377 (AVFLIGVYSLPPVCLGYLISGFIM) threads the bilayer. Residues 378–381 (KKFK) lie on the Cytoplasmic side of the membrane. Residues 382–405 (ITVKKAAYIAFGLSLSEYFIFLCN) traverse the membrane as a helical segment. Residues 406–513 (YLLTCDNFPV…PECDNKLQYF (108 aa)) are Extracellular-facing. The Kazal-like domain occupies 433–488 (KNVLADCNTRCSCLTDTWDPVCGDNGLAYMSACLAGCEKSVGTGTNMVFQNCSCIG). Intrachain disulfides connect Cys439–Cys469, Cys445–Cys465, and Cys454–Cys486. N-linked (GlcNAc...) asparagine glycosylation is found at Asn483 and Asn492. The chain crosses the membrane as a helical span at residues 514–536 (LIKSVFSSFIFSLAAIPGYMVLL). Over 537-545 (RCVKSEEKS) the chain is Cytoplasmic. A helical transmembrane segment spans residues 546 to 571 (IGVGLHAFFIRLLAGIPAPVYFGALI). The Extracellular portion of the chain corresponds to 572–605 (DRTCLHWGTLKCGQPGACRMYDINRFRHIYLGLP). A helical membrane pass occupies residues 606–623 (AAVRGSSFLPAVFILILM). The Cytoplasmic segment spans residues 624 to 670 (RKFHFPGDIHSPDTELAEMKLTEKESECTDVCRSPKVENDGELKTKL). Ser634 is subject to Phosphoserine.

This sequence belongs to the organo anion transporter (TC 2.A.60) family. Binds to PDZK1. Interaction with PDZK1 is required for expression on hepatocyte surface. In terms of tissue distribution, highly expressed in liver, and at lower levels in kidney. Not detected in other tissues.

It is found in the basolateral cell membrane. It carries out the reaction estrone 3-sulfate(out) + hydrogencarbonate(in) = estrone 3-sulfate(in) + hydrogencarbonate(out). The enzyme catalyses taurocholate(out) + hydrogencarbonate(in) = taurocholate(in) + hydrogencarbonate(out). The catalysed reaction is L-thyroxine(out) = L-thyroxine(in). It catalyses the reaction prostaglandin E2(out) = prostaglandin E2(in). It carries out the reaction 17beta-estradiol 17-O-(beta-D-glucuronate)(out) = 17beta-estradiol 17-O-(beta-D-glucuronate)(in). The enzyme catalyses dehydroepiandrosterone 3-sulfate(out) = dehydroepiandrosterone 3-sulfate(in). Functionally, mediates the Na(+)-independent transport of organic anions such as steroid sulfate conjugates (dehydroepiandrosterone sulfate (DHEAS), 17-beta-glucuronosyl estradiol, estrone-3-sulfate), conjugated (taurocholate) and unconjugated (cholate) bile acids, prostaglandin E2 (PGE2) and L-thyroxine T4. Also capable of transporting sulfobromophthalein (BSP), ouabain and gadoxetate. Hydrogencarbonate/HCO3(-) acts as the probable counteranion that exchanges for organic anions. Shows a pH-sensitive substrate specificity which may be ascribed to the protonation state of the binding site and leads to a stimulation of substrate transport in an acidic microenvironment. The protein is Solute carrier organic anion transporter family member 1A1 of Mus musculus (Mouse).